The chain runs to 339 residues: Homeobox protein Hox-D13 (339 aa).

The interval 1 to 33 is disordered; the sequence is MSRSGTWDMDGLRADGGAAGAAPASSSSSVAAP. Positions 20–33 are enriched in low complexity; it reads GAAPASSSSSVAAP. A DNA-binding region (homeobox) is located at residues 272 to 331; the sequence is GRKKRVPYTKLQLKELENEYAINKFINKDKRRRISAATNLSERQVTIWFQNRRVKDKKIV.

Belongs to the Abd-B homeobox family.

It localises to the nucleus. Its function is as follows. Sequence-specific transcription factor that binds gene promoters and activates their transcription. Part of a developmental regulatory system that provides cells with specific positional identities on the anterior-posterior axis. In Mus musculus (Mouse), this protein is Homeobox protein Hox-D13 (Hoxd13).